Here is a 334-residue protein sequence, read N- to C-terminus: Ornithine carbamoyltransferase (334 aa).

Residues 57-60 (STRT), glutamine 84, arginine 108, and 135-138 (HPTQ) contribute to the carbamoyl phosphate site. Residues asparagine 168, aspartate 233, and 237 to 238 (SM) contribute to the L-ornithine site. Carbamoyl phosphate contacts are provided by residues 275–276 (CL) and arginine 320.

The protein belongs to the aspartate/ornithine carbamoyltransferase superfamily. OTCase family.

Its subcellular location is the cytoplasm. It carries out the reaction carbamoyl phosphate + L-ornithine = L-citrulline + phosphate + H(+). The protein operates within amino-acid biosynthesis; L-arginine biosynthesis; L-arginine from L-ornithine and carbamoyl phosphate: step 1/3. Reversibly catalyzes the transfer of the carbamoyl group from carbamoyl phosphate (CP) to the N(epsilon) atom of ornithine (ORN) to produce L-citrulline. In Thermobifida fusca (strain YX), this protein is Ornithine carbamoyltransferase.